A 300-amino-acid polypeptide reads, in one-letter code: Quinolinate synthase (300 aa).

Iminosuccinate contacts are provided by His21 and Ser38. Position 83 (Cys83) interacts with [4Fe-4S] cluster. Iminosuccinate is bound by residues 109-111 (YVN) and Ser126. Cys170 contacts [4Fe-4S] cluster. Iminosuccinate-binding positions include 196-198 (HPE) and Thr213. Residue Cys256 participates in [4Fe-4S] cluster binding.

It belongs to the quinolinate synthase family. Type 2 subfamily. In terms of assembly, monomer. Homodimer. Requires [4Fe-4S] cluster as cofactor.

It localises to the cytoplasm. The catalysed reaction is iminosuccinate + dihydroxyacetone phosphate = quinolinate + phosphate + 2 H2O + H(+). It functions in the pathway cofactor biosynthesis; NAD(+) biosynthesis; quinolinate from iminoaspartate: step 1/1. Functionally, catalyzes the condensation of iminoaspartate with dihydroxyacetone phosphate to form quinolinate. The chain is Quinolinate synthase from Pyrococcus horikoshii (strain ATCC 700860 / DSM 12428 / JCM 9974 / NBRC 100139 / OT-3).